We begin with the raw amino-acid sequence, 150 residues long: Ribosome maturation factor RimP (150 aa).

Belongs to the RimP family.

The protein resides in the cytoplasm. Required for maturation of 30S ribosomal subunits. This chain is Ribosome maturation factor RimP, found in Francisella tularensis subsp. mediasiatica (strain FSC147).